The sequence spans 706 residues: Zinc transporter foi (706 aa).

A signal peptide spans Met1–Cys21. Over Gln22–Trp261 the chain is Extracellular. The span at Gln40–Glu56 shows a compositional bias: polar residues. Residues Gln40 to Pro101 form a disordered region. 6 N-linked (GlcNAc...) asparagine glycosylation sites follow: Asn74, Asn119, Asn176, Asn182, Asn196, and Asn207. Residues Ile262–Ile282 form a helical membrane-spanning segment. Residues Pro283–Tyr292 are Cytoplasmic-facing. Residues Ile293 to Leu313 traverse the membrane as a helical segment. The Extracellular portion of the chain corresponds to Leu314–Lys329. A helical transmembrane segment spans residues Gly330–Ile350. Over Ser351 to Ser604 the chain is Cytoplasmic. Phosphoserine occurs at positions 376, 377, and 381. The chain crosses the membrane as a helical span at residues Ala605–Ala625. The Extracellular segment spans residues Phe626–Asp631. A helical membrane pass occupies residues Val632 to Met652. At Met653–Gln665 the chain is on the cytoplasmic side. A helical membrane pass occupies residues Phe666 to Tyr686. Topologically, residues Glu687–His706 are extracellular.

Belongs to the ZIP transporter (TC 2.A.5) family. Post-translationally, glycosylated. As to expression, maternal foi has almost completely disappeared by embryonic stage 3 except in the pole cells. In stage 6 embryos, expression is enriched in the invaginating mesoderm. In stage 9 embryos, high levels in the anterior and posterior midgut primordia. In stage 14 embryos, broad expression with low levels in the epidermis.

It localises to the cell membrane. In terms of biological role, required for the normal migration of longitudinal and peripheral glial cells. During larval development, required for the migration of the subretinal glia into the eye disk. During embryonic development, also controls the migration of muscle cells toward their attachment sites. Required in the mesoderm for the correct morphogenesis of embryonic gonad and for tracheal branch fusion during tracheal development. Shg may be cooperating with foi to mediate a common mechanism for gonad and tracheal morphogenesis. Acts as a zinc transporter in both yeast and mammalian cells. The polypeptide is Zinc transporter foi (Drosophila melanogaster (Fruit fly)).